We begin with the raw amino-acid sequence, 124 residues long: UPF0225 protein SCO1677 (124 aa).

The protein belongs to the UPF0225 family.

This chain is UPF0225 protein SCO1677, found in Streptomyces coelicolor (strain ATCC BAA-471 / A3(2) / M145).